The chain runs to 120 residues: NAD(P)H-quinone oxidoreductase subunit 3, chloroplastic (120 aa).

3 helical membrane-spanning segments follow: residues 9-29 (IFWAFLIISSLIPILAFLISG), 64-84 (MFALIFVVFDVETVFLYPWAM), and 88-108 (VLGVSVFLEAFLFVLILIVGS).

The protein belongs to the complex I subunit 3 family. As to quaternary structure, NDH is composed of at least 16 different subunits, 5 of which are encoded in the nucleus.

It is found in the plastid. It localises to the chloroplast thylakoid membrane. The catalysed reaction is a plastoquinone + NADH + (n+1) H(+)(in) = a plastoquinol + NAD(+) + n H(+)(out). It catalyses the reaction a plastoquinone + NADPH + (n+1) H(+)(in) = a plastoquinol + NADP(+) + n H(+)(out). In terms of biological role, NDH shuttles electrons from NAD(P)H:plastoquinone, via FMN and iron-sulfur (Fe-S) centers, to quinones in the photosynthetic chain and possibly in a chloroplast respiratory chain. The immediate electron acceptor for the enzyme in this species is believed to be plastoquinone. Couples the redox reaction to proton translocation, and thus conserves the redox energy in a proton gradient. In Phaseolus vulgaris (Kidney bean), this protein is NAD(P)H-quinone oxidoreductase subunit 3, chloroplastic.